A 539-amino-acid chain; its full sequence is Glucose-6-phosphate isomerase (539 aa).

The active-site Proton donor is glutamate 353. Active-site residues include histidine 384 and lysine 505.

This sequence belongs to the GPI family.

It is found in the cytoplasm. It carries out the reaction alpha-D-glucose 6-phosphate = beta-D-fructose 6-phosphate. The protein operates within carbohydrate biosynthesis; gluconeogenesis. Its pathway is carbohydrate degradation; glycolysis; D-glyceraldehyde 3-phosphate and glycerone phosphate from D-glucose: step 2/4. Catalyzes the reversible isomerization of glucose-6-phosphate to fructose-6-phosphate. The polypeptide is Glucose-6-phosphate isomerase (Ralstonia pickettii (strain 12J)).